A 297-amino-acid polypeptide reads, in one-letter code: Homoserine kinase (297 aa).

82 to 92 contacts ATP; that stretch reads PLTRGLGSSAS.

The protein belongs to the GHMP kinase family. Homoserine kinase subfamily.

The protein localises to the cytoplasm. The enzyme catalyses L-homoserine + ATP = O-phospho-L-homoserine + ADP + H(+). Its pathway is amino-acid biosynthesis; L-threonine biosynthesis; L-threonine from L-aspartate: step 4/5. In terms of biological role, catalyzes the ATP-dependent phosphorylation of L-homoserine to L-homoserine phosphate. This Bacillus cereus (strain AH187) protein is Homoserine kinase.